Consider the following 256-residue polypeptide: Coiled-coil domain-containing protein 90B, mitochondrial (256 aa).

A mitochondrion-targeting transit peptide spans 1 to 42 (MRNRWIWRFLRPECSGIRWISSPHGRLSPALRRGFLTTTTKS). The stretch at 106-164 (AQQEITIQQLMAHLDSIRKDMVILEKSEFANLRAENEKMKIELDQVKQQLINETSRIRA) forms a coiled coil. Residues 231-253 (TIRYLAASVFTCLAIALGFYRFW) form a helical membrane-spanning segment.

It belongs to the CCDC90 family. In terms of assembly, interacts with MCU.

The protein localises to the mitochondrion membrane. The polypeptide is Coiled-coil domain-containing protein 90B, mitochondrial (Ccdc90b) (Rattus norvegicus (Rat)).